We begin with the raw amino-acid sequence, 209 residues long: Methylated-DNA--protein-cysteine methyltransferase (209 aa).

C5 lines the Zn(2+) pocket. S14 is subject to Phosphoserine. The Zn(2+) site is built by C24 and H29. Residues 35–57 are disordered; sequence SGKTPSSDPKEAPASPELLGGPE. Residue H89 participates in Zn(2+) binding. DNA is bound by residues T99, Y118, Q119, N127, and R132. C149 serves as the catalytic Nucleophile; methyl group acceptor. S155 lines the DNA pocket. A Phosphoserine modification is found at S205.

This sequence belongs to the MGMT family. It depends on Zn(2+) as a cofactor.

The protein localises to the nucleus. It carries out the reaction a 6-O-methyl-2'-deoxyguanosine in DNA + L-cysteinyl-[protein] = S-methyl-L-cysteinyl-[protein] + a 2'-deoxyguanosine in DNA. The enzyme catalyses a 4-O-methyl-thymidine in DNA + L-cysteinyl-[protein] = a thymidine in DNA + S-methyl-L-cysteinyl-[protein]. Involved in the cellular defense against the biological effects of O6-methylguanine (O6-MeG) and O4-methylthymine (O4-MeT) in DNA. Repairs the methylated nucleobase in DNA by stoichiometrically transferring the methyl group to a cysteine residue in the enzyme. This is a suicide reaction: the enzyme is irreversibly inactivated. The polypeptide is Methylated-DNA--protein-cysteine methyltransferase (MGMT) (Cricetulus griseus (Chinese hamster)).